A 320-amino-acid chain; its full sequence is Malate dehydrogenase (320 aa).

NAD(+) contacts are provided by residues Gly-10–Gly-15 and Asp-34. Arg-83 and Arg-89 together coordinate substrate. NAD(+) contacts are provided by residues Asn-96 and Ile-119–Asn-121. Residues Asn-121 and Arg-152 each coordinate substrate. Residue His-176 is the Proton acceptor of the active site.

The protein belongs to the LDH/MDH superfamily. MDH type 3 family.

The catalysed reaction is (S)-malate + NAD(+) = oxaloacetate + NADH + H(+). In terms of biological role, catalyzes the reversible oxidation of malate to oxaloacetate. In Brucella suis (strain ATCC 23445 / NCTC 10510), this protein is Malate dehydrogenase.